A 217-amino-acid chain; its full sequence is Elongation factor Ts (217 aa).

The involved in Mg(2+) ion dislocation from EF-Tu stretch occupies residues 82-85; it reads TDFV.

Belongs to the EF-Ts family.

It localises to the cytoplasm. Associates with the EF-Tu.GDP complex and induces the exchange of GDP to GTP. It remains bound to the aminoacyl-tRNA.EF-Tu.GTP complex up to the GTP hydrolysis stage on the ribosome. This Desulforamulus reducens (strain ATCC BAA-1160 / DSM 100696 / MI-1) (Desulfotomaculum reducens) protein is Elongation factor Ts.